The sequence spans 209 residues: NADH-ubiquinone oxidoreductase subunit 9 (209 aa).

It belongs to the complex I 30 kDa subunit family. In terms of assembly, complex I is composed of about 30 different subunits.

It is found in the mitochondrion inner membrane. The catalysed reaction is a ubiquinone + NADH + 5 H(+)(in) = a ubiquinol + NAD(+) + 4 H(+)(out). Its function is as follows. Core subunit of the mitochondrial membrane respiratory chain NADH dehydrogenase (Complex I) that is believed to belong to the minimal assembly required for catalysis. Complex I functions in the transfer of electrons from NADH to the respiratory chain. The immediate electron acceptor for the enzyme is believed to be ubiquinone. This Paramecium primaurelia protein is NADH-ubiquinone oxidoreductase subunit 9 (NAD9).